We begin with the raw amino-acid sequence, 335 residues long: Nicotinate-nucleotide--dimethylbenzimidazole phosphoribosyltransferase (335 aa).

The active-site Proton acceptor is the Glu-304.

It belongs to the CobT family.

It carries out the reaction 5,6-dimethylbenzimidazole + nicotinate beta-D-ribonucleotide = alpha-ribazole 5'-phosphate + nicotinate + H(+). The protein operates within nucleoside biosynthesis; alpha-ribazole biosynthesis; alpha-ribazole from 5,6-dimethylbenzimidazole: step 1/2. Functionally, catalyzes the synthesis of alpha-ribazole-5'-phosphate from nicotinate mononucleotide (NAMN) and 5,6-dimethylbenzimidazole (DMB). The chain is Nicotinate-nucleotide--dimethylbenzimidazole phosphoribosyltransferase from Thermus thermophilus (strain ATCC 27634 / DSM 579 / HB8).